Here is a 571-residue protein sequence, read N- to C-terminus: Glutamine--tRNA ligase (571 aa).

Residues 35 to 45 (PEPNGYLHIGH) carry the 'HIGH' region motif. ATP-binding positions include 36 to 38 (EPN) and 42 to 48 (HIGHAKS). Positions 68 and 213 each coordinate L-glutamine. ATP-binding positions include Thr232, 262-263 (RL), and 270-272 (LSK). The 'KMSKS' region signature appears at 269 to 273 (ILSKR).

It belongs to the class-I aminoacyl-tRNA synthetase family. In terms of assembly, monomer.

It localises to the cytoplasm. The enzyme catalyses tRNA(Gln) + L-glutamine + ATP = L-glutaminyl-tRNA(Gln) + AMP + diphosphate. The chain is Glutamine--tRNA ligase from Buchnera aphidicola subsp. Acyrthosiphon pisum (strain APS) (Acyrthosiphon pisum symbiotic bacterium).